The sequence spans 559 residues: T-complex protein 1 subunit gamma (559 aa).

Cys-369 and Cys-375 are joined by a disulfide. The disordered stretch occupies residues 537-559; that stretch reads GGASVTDGNGQEIPETFGDARDG.

It belongs to the TCP-1 chaperonin family. Heterooligomeric complex of about 850 to 900 kDa that forms two stacked rings, 12 to 16 nm in diameter.

It is found in the cytoplasm. In terms of biological role, molecular chaperone; assists the folding of proteins upon ATP hydrolysis. Known to play a role, in vitro, in the folding of actin and tubulin. This Tetrahymena pyriformis protein is T-complex protein 1 subunit gamma.